The primary structure comprises 325 residues: Elongation factor P--(R)-beta-lysine ligase (325 aa).

76–78 (SPE) contacts substrate. ATP is bound by residues 100 to 102 (RNE) and Asn-109. Tyr-118 is a substrate binding site. 244 to 245 (EL) contributes to the ATP binding site. Substrate is bound at residue Glu-251. Gly-300 contributes to the ATP binding site.

The protein belongs to the class-II aminoacyl-tRNA synthetase family. EpmA subfamily. As to quaternary structure, homodimer.

The catalysed reaction is D-beta-lysine + L-lysyl-[protein] + ATP = N(6)-((3R)-3,6-diaminohexanoyl)-L-lysyl-[protein] + AMP + diphosphate + H(+). Its function is as follows. With EpmB is involved in the beta-lysylation step of the post-translational modification of translation elongation factor P (EF-P). Catalyzes the ATP-dependent activation of (R)-beta-lysine produced by EpmB, forming a lysyl-adenylate, from which the beta-lysyl moiety is then transferred to the epsilon-amino group of a conserved specific lysine residue in EF-P. This is Elongation factor P--(R)-beta-lysine ligase from Edwardsiella ictaluri (strain 93-146).